Reading from the N-terminus, the 347-residue chain is Protein POOR HOMOLOGOUS SYNAPSIS 1 (347 aa).

It is found in the cytoplasm. Its function is as follows. Required for accurate chromosome segregation in meiosis. Required for pairing to occur between homologous chromosomes. Acts in early recombination steps and ensures pairing fidelity and proper repair of meiotic DNA double-strand-breaks. Regulates recombination and pairing of homologous chromosomes during meiotic prophase by controlling transport of RAD50 from cytoplasm to the nucleus. May affect pairing of the gene-rich fraction of the genome rather than preventing pairing between repetitive DNA elements. The chain is Protein POOR HOMOLOGOUS SYNAPSIS 1 from Zea mays (Maize).